The primary structure comprises 282 residues: Undecaprenyl-diphosphatase 1 (282 aa).

The next 8 helical transmembrane spans lie at 1 to 21 (MLLL…VLPL), 46 to 66 (GVAL…LYFW), 91 to 111 (AFLV…LAHF), 117 to 137 (SPGL…LGVI), 150 to 170 (MGGI…LPGV), 193 to 213 (FSML…GLDL), 226 to 246 (LIAA…MMAW), and 260 to 280 (VLLG…APFL).

This sequence belongs to the UppP family.

It localises to the cell inner membrane. It catalyses the reaction di-trans,octa-cis-undecaprenyl diphosphate + H2O = di-trans,octa-cis-undecaprenyl phosphate + phosphate + H(+). Catalyzes the dephosphorylation of undecaprenyl diphosphate (UPP). Confers resistance to bacitracin. The protein is Undecaprenyl-diphosphatase 1 of Rhodospirillum rubrum (strain ATCC 11170 / ATH 1.1.1 / DSM 467 / LMG 4362 / NCIMB 8255 / S1).